The following is a 444-amino-acid chain: Methylenetetrahydrofolate--tRNA-(uracil-5-)-methyltransferase TrmFO (444 aa).

Gly10–Gly15 provides a ligand contact to FAD.

Belongs to the MnmG family. TrmFO subfamily. FAD is required as a cofactor.

The protein resides in the cytoplasm. It carries out the reaction uridine(54) in tRNA + (6R)-5,10-methylene-5,6,7,8-tetrahydrofolate + NADH + H(+) = 5-methyluridine(54) in tRNA + (6S)-5,6,7,8-tetrahydrofolate + NAD(+). It catalyses the reaction uridine(54) in tRNA + (6R)-5,10-methylene-5,6,7,8-tetrahydrofolate + NADPH + H(+) = 5-methyluridine(54) in tRNA + (6S)-5,6,7,8-tetrahydrofolate + NADP(+). Its function is as follows. Catalyzes the folate-dependent formation of 5-methyl-uridine at position 54 (M-5-U54) in all tRNAs. This Streptococcus equi subsp. zooepidemicus (strain H70) protein is Methylenetetrahydrofolate--tRNA-(uracil-5-)-methyltransferase TrmFO.